Here is a 141-residue protein sequence, read N- to C-terminus: Large ribosomal subunit protein uL11 (141 aa).

The protein belongs to the universal ribosomal protein uL11 family. Part of the ribosomal stalk of the 50S ribosomal subunit. Interacts with L10 and the large rRNA to form the base of the stalk. L10 forms an elongated spine to which L12 dimers bind in a sequential fashion forming a multimeric L10(L12)X complex. One or more lysine residues are methylated.

Forms part of the ribosomal stalk which helps the ribosome interact with GTP-bound translation factors. In Bacillus cereus (strain ATCC 10987 / NRS 248), this protein is Large ribosomal subunit protein uL11.